The sequence spans 256 residues: DNA repair protein RecO (256 aa).

This sequence belongs to the RecO family.

In terms of biological role, involved in DNA repair and RecF pathway recombination. This Desulforamulus reducens (strain ATCC BAA-1160 / DSM 100696 / MI-1) (Desulfotomaculum reducens) protein is DNA repair protein RecO.